Here is a 289-residue protein sequence, read N- to C-terminus: 33 kDa chaperonin (289 aa).

2 disulfide bridges follow: cysteine 229–cysteine 231 and cysteine 262–cysteine 265.

The protein belongs to the HSP33 family. Post-translationally, under oxidizing conditions two disulfide bonds are formed involving the reactive cysteines. Under reducing conditions zinc is bound to the reactive cysteines and the protein is inactive.

It is found in the cytoplasm. Its function is as follows. Redox regulated molecular chaperone. Protects both thermally unfolding and oxidatively damaged proteins from irreversible aggregation. Plays an important role in the bacterial defense system toward oxidative stress. The sequence is that of 33 kDa chaperonin from Pectobacterium atrosepticum (strain SCRI 1043 / ATCC BAA-672) (Erwinia carotovora subsp. atroseptica).